Reading from the N-terminus, the 386-residue chain is Protein phosphatase methylesterase 1 (386 aa).

Positions 1–38 are disordered; it reads MSALEKSMHLGRLPSRPPLPGSGGSQSGAKMRMGPGRK. The residue at position 15 (Ser-15) is a Phosphoserine. Arg-16 carries the post-translational modification Asymmetric dimethylarginine; alternate. Position 16 is an omega-N-methylarginine; alternate (Arg-16). Catalysis depends on residues Ser-156 and Asp-181. Residues 255–265 are compositionally biased toward acidic residues; sequence IEEEEEDEEGS. The interval 255-280 is disordered; the sequence is IEEEEEDEEGSESVNKRKKEDDMETK. Basic and acidic residues predominate over residues 268–280; that stretch reads VNKRKKEDDMETK. His-349 is a catalytic residue.

Belongs to the AB hydrolase superfamily. As to quaternary structure, binds PPP2CA and PPP2CB. Post-translationally, phosphorylated by SIK1 following increases in intracellular sodium, leading to dissociation from the protein phosphatase 2A (PP2A) complex and subsequent dephosphorylation of sodium/potassium-transporting ATPase ATP1A1. Ubiquitous. Highly expressed in testis and brain.

The enzyme catalyses [phosphatase 2A protein]-C-terminal L-leucine methyl ester + H2O = [phosphatase 2A protein]-C-terminal L-leucine + methanol + H(+). Demethylates proteins that have been reversibly carboxymethylated. Demethylates PPP2CB (in vitro) and PPP2CA. Binding to PPP2CA displaces the manganese ion and inactivates the enzyme. The sequence is that of Protein phosphatase methylesterase 1 (Ppme1) from Mus musculus (Mouse).